Reading from the N-terminus, the 488-residue chain is Ribulose bisphosphate carboxylase large chain (488 aa).

Substrate-binding residues include N127 and T177. K179 serves as the catalytic Proton acceptor. K181 contacts substrate. Mg(2+) contacts are provided by K205, D207, and E208. At K205 the chain carries N6-carboxylysine. Catalysis depends on H297, which acts as the Proton acceptor. Positions 298, 330, and 382 each coordinate substrate.

The protein belongs to the RuBisCO large chain family. Type I subfamily. In terms of assembly, heterohexadecamer of 8 large chains and 8 small chains. The cofactor is Mg(2+).

Its subcellular location is the plastid. It localises to the chloroplast. The catalysed reaction is 2 (2R)-3-phosphoglycerate + 2 H(+) = D-ribulose 1,5-bisphosphate + CO2 + H2O. It catalyses the reaction D-ribulose 1,5-bisphosphate + O2 = 2-phosphoglycolate + (2R)-3-phosphoglycerate + 2 H(+). RuBisCO catalyzes two reactions: the carboxylation of D-ribulose 1,5-bisphosphate, the primary event in carbon dioxide fixation, as well as the oxidative fragmentation of the pentose substrate in the photorespiration process. Both reactions occur simultaneously and in competition at the same active site. The polypeptide is Ribulose bisphosphate carboxylase large chain (Guillardia theta (Cryptophyte)).